The chain runs to 1228 residues: MDRHDTMDFTNEPLSKKRRFLGDQGDSDHVAGGPSSSPQFSAPPSSPPRKKLLQDPNSEVQPRVSKDADHNDDDDDDDDDDDEERPRFFTDDGTLTPHATKICAPWLNDMPKPDPRKGYLLKDVDTPIATPRDVAPPVVESPQLAFDKDTFEAFVGEKVASDILHVISKNCGNNIERAVNMYLDGTWKKLHRAPPVRVNSHSPLVVGGQSPKKSSTSQARSRSHAQAQPQPQSNTPTKVLPSMPDARYVGAFGVEGWATRSGTGLLRHGDSVKIERQKIQPPTVARKGQTKPGTPQSIPRVSAAAAKRVDVIVRFNDASGRELGRLAKDTANWVSTLIDQNICRFEGICVYAPERLRTNETVFLQLKCYMLRSAFLGRTLQLADNRAAGFHEKDETTEEKDLRLRQVALVRLFQEINIVPSRGNAAAAKDARKDLLEAADSAEKKAMDKAKAGDHNTNGLASPPEEAEEGQELEQDQLDALYKKAQSFDFSTPEAEPANTFAMTLRPYQKQSLYWMLAKEKNQRTEDRETSMHPLWEEYVWPTKDHDDKDLPVVPDQPCFYVNPYSGDLSLDFPKQEQHCLGGILADEMGLGKTIQMLSLIHSHRSEVAIKAREAGPTSVNNLPRLPTVSGQKTTIDAPCTTLVVAPMSLLAQWQSEAENASKEGTFKTMMYYGAEKNVDLVTMCCEANAANAPDVIITSYGVVLSEFTQLATKNGDRLSSRGLFSLNFFRVILDEAHNIKNRQAKTSRACYEIAAEHRWVLTGTPIVNRLEDLFSLVRFLRVEPWNNFSFWRTFITVPFESKNFVRALDVVQTVLEPLVMRRTKDMKTPDGQFLVPLPPKHIEIVDIELSEPERAVYDYVFNRAKRTLFDNMQAGTVMKAFTSIFAQILRLRQSCCHPVLVRNQEILADEEEANMAADVAAGLADDMDLQTLIERFTATTDDASKTNNNFGAHVLRQIRDEAVNECPICAEEPMIDQAVTGCWHSACKKCLLDYIKHQTDRNEVPRCFQCREHINIRDIFEVIRHDDDLETSSTPGASPEPRISLQRVGANDSSAKIVALISHLRTLRQEHPKMKSLVISQFTSFLSLISSALTRHKISFLRLDGSMSQKARAAVLTEFQSTNKFCVLLLSLKAGGVGLNLTSAKRVYMMDPWWSFAVEAQAIDRVHRMGQEDEVRVYRFIVKQSVEMRMLRVQERKKFIATSLGMMSDEEKKMQRIEDIKELLSSD.

Disordered regions lie at residues 1–96 (MDRH…GTLT), 194–242 (PPVR…VLPS), 280–302 (QPPT…PRVS), and 445–474 (KAMD…QELE). Positions 34 to 43 (PSSSPQFSAP) are enriched in low complexity. Residues 70–83 (HNDDDDDDDDDDDE) are compositionally biased toward acidic residues. The segment covering 211–237 (PKKSSTSQARSRSHAQAQPQPQSNTPT) has biased composition (polar residues). The span at 445 to 454 (KAMDKAKAGD) shows a compositional bias: basic and acidic residues. The segment covering 465 to 474 (EEAEEGQELE) has biased composition (acidic residues). The 211-residue stretch at 574-784 (PKQEQHCLGG…FSLVRFLRVE (211 aa)) folds into the Helicase ATP-binding domain. 587–594 (DEMGLGKT) serves as a coordination point for ATP. The DEAH box motif lies at 735–738 (DEAH). Residues 967-1012 (CPICAEEPMIDQAVTGCWHSACKKCLLDYIKHQTDRNEVPRCFQCR) form an RING-type zinc finger. The region spanning 1060-1216 (ALISHLRTLR…MMSDEEKKMQ (157 aa)) is the Helicase C-terminal domain.

Belongs to the SNF2/RAD54 helicase family.

The protein localises to the cytoplasm. Its subcellular location is the nucleus. Its function is as follows. Probable helicase, member of the UBC2/RAD6 epistasis group. Functions with DNA repair protein uvs-2/rad18 in error-free postreplication DNA repair. Involved in the maintenance of wild-type rates of instability of simple repetitive sequences such as poly(GT) repeats. Seems to be involved in maintaining a balance which acts in favor of error-prone non-homologous joining during DNA double-strand breaks repairs. In Neurospora crassa (strain ATCC 24698 / 74-OR23-1A / CBS 708.71 / DSM 1257 / FGSC 987), this protein is DNA repair protein rad5 (mus-41).